A 107-amino-acid polypeptide reads, in one-letter code: Integration host factor subunit beta (107 aa).

The segment at 76–107 (FVPHFKPGKELRERVDGRAGEPLKADDPDDER) is disordered. Positions 82 to 101 (PGKELRERVDGRAGEPLKAD) are enriched in basic and acidic residues.

The protein belongs to the bacterial histone-like protein family. In terms of assembly, heterodimer of an alpha and a beta chain.

Functionally, this protein is one of the two subunits of integration host factor, a specific DNA-binding protein that functions in genetic recombination as well as in transcriptional and translational control. This chain is Integration host factor subunit beta, found in Burkholderia cenocepacia (strain ATCC BAA-245 / DSM 16553 / LMG 16656 / NCTC 13227 / J2315 / CF5610) (Burkholderia cepacia (strain J2315)).